The chain runs to 667 residues: Protein angel homolog 1 (667 aa).

Phosphoserine occurs at positions 77 and 105.

This sequence belongs to the CCR4/nocturin family.

This chain is Protein angel homolog 1, found in Rattus norvegicus (Rat).